The sequence spans 853 residues: DNA mismatch repair protein MutS (853 aa).

613–620 (GPNMGGKS) lines the ATP pocket.

This sequence belongs to the DNA mismatch repair MutS family.

Functionally, this protein is involved in the repair of mismatches in DNA. It is possible that it carries out the mismatch recognition step. This protein has a weak ATPase activity. The chain is DNA mismatch repair protein MutS from Vibrio parahaemolyticus serotype O3:K6 (strain RIMD 2210633).